The following is a 341-amino-acid chain: UDP-N-acetylenolpyruvoylglucosamine reductase (341 aa).

Residues 15–185 (VEQSCLSLIE…TAVGLRLPKA (171 aa)) enclose the FAD-binding PCMH-type domain. Arg-161 is a catalytic residue. Residue Ser-231 is the Proton donor of the active site. Residue Glu-327 is part of the active site.

This sequence belongs to the MurB family. FAD is required as a cofactor.

It is found in the cytoplasm. It carries out the reaction UDP-N-acetyl-alpha-D-muramate + NADP(+) = UDP-N-acetyl-3-O-(1-carboxyvinyl)-alpha-D-glucosamine + NADPH + H(+). It participates in cell wall biogenesis; peptidoglycan biosynthesis. Cell wall formation. This Shewanella sp. (strain ANA-3) protein is UDP-N-acetylenolpyruvoylglucosamine reductase.